The sequence spans 261 residues: 3-methyl-2-oxobutanoate hydroxymethyltransferase (261 aa).

Mg(2+)-binding residues include Asp-42 and Asp-81. Residues 42-43 (DS), Asp-81, and Lys-110 each bind 3-methyl-2-oxobutanoate. Glu-112 is a Mg(2+) binding site. Glu-179 serves as the catalytic Proton acceptor.

Belongs to the PanB family. In terms of assembly, homodecamer; pentamer of dimers. It depends on Mg(2+) as a cofactor.

The protein localises to the cytoplasm. The catalysed reaction is 3-methyl-2-oxobutanoate + (6R)-5,10-methylene-5,6,7,8-tetrahydrofolate + H2O = 2-dehydropantoate + (6S)-5,6,7,8-tetrahydrofolate. It participates in cofactor biosynthesis; (R)-pantothenate biosynthesis; (R)-pantoate from 3-methyl-2-oxobutanoate: step 1/2. In terms of biological role, catalyzes the reversible reaction in which hydroxymethyl group from 5,10-methylenetetrahydrofolate is transferred onto alpha-ketoisovalerate to form ketopantoate. The protein is 3-methyl-2-oxobutanoate hydroxymethyltransferase of Thermus thermophilus (strain ATCC BAA-163 / DSM 7039 / HB27).